We begin with the raw amino-acid sequence, 492 residues long: Stromelysin-3 (492 aa).

Positions 1–35 are cleaved as a signal peptide; that stretch reads MARAACLLRAISRVLLLPLPLLLLLLLLLPSPLMA. The propeptide at 36–101 is activation peptide; that stretch reads RARPPESHRH…VLNARNRQKR (66 aa). Positions 82-89 match the Cysteine switch motif; that stretch reads LRCGVPDL. Cys-84, His-168, and Asp-170 together coordinate Zn(2+). Asp-175, Gly-176, Gly-178, and Ile-180 together coordinate Ca(2+). Zn(2+) contacts are provided by His-183, His-196, and His-219. Glu-220 is a catalytic residue. Residues His-223 and His-229 each coordinate Zn(2+). Hemopexin repeat units lie at residues 295–343, 344–386, 388–436, and 437–484; these read PDVC…WQGL, PSPV…KLGL, GSPV…WRGV, and PSEI…FFDC. A disulfide bridge links Cys-298 with Cys-484.

This sequence belongs to the peptidase M10A family. Ca(2+) is required as a cofactor. Zn(2+) serves as cofactor. In terms of processing, the precursor is cleaved by a furin endopeptidase. As to expression, specifically expressed in the mammary gland during apoptosis.

It localises to the secreted. Its subcellular location is the extracellular space. The protein localises to the extracellular matrix. May play an important role in the progression of epithelial malignancies. The chain is Stromelysin-3 (Mmp11) from Mus musculus (Mouse).